We begin with the raw amino-acid sequence, 396 residues long: Tryptophan synthase beta chain (396 aa).

An N6-(pyridoxal phosphate)lysine modification is found at lysine 86.

The protein belongs to the TrpB family. In terms of assembly, tetramer of two alpha and two beta chains. The cofactor is pyridoxal 5'-phosphate.

The enzyme catalyses (1S,2R)-1-C-(indol-3-yl)glycerol 3-phosphate + L-serine = D-glyceraldehyde 3-phosphate + L-tryptophan + H2O. It functions in the pathway amino-acid biosynthesis; L-tryptophan biosynthesis; L-tryptophan from chorismate: step 5/5. In terms of biological role, the beta subunit is responsible for the synthesis of L-tryptophan from indole and L-serine. The chain is Tryptophan synthase beta chain from Francisella tularensis subsp. novicida (strain U112).